A 249-amino-acid polypeptide reads, in one-letter code: Isoamyl acetate-hydrolyzing esterase 1 homolog (249 aa).

Ser-24 functions as the Nucleophile in the catalytic mechanism. Position 63 is an N6-succinyllysine (Lys-63). Asp-197 functions as the Proton donor in the catalytic mechanism. His-200 acts as the Proton acceptor in catalysis.

Belongs to the 'GDSL' lipolytic enzyme family. IAH1 subfamily.

Functionally, probable lipase. This is Isoamyl acetate-hydrolyzing esterase 1 homolog (Iah1) from Rattus norvegicus (Rat).